The sequence spans 129 residues: Ribosome-binding factor A (129 aa).

It belongs to the RbfA family. As to quaternary structure, monomer. Binds 30S ribosomal subunits, but not 50S ribosomal subunits or 70S ribosomes.

Its subcellular location is the cytoplasm. Its function is as follows. One of several proteins that assist in the late maturation steps of the functional core of the 30S ribosomal subunit. Associates with free 30S ribosomal subunits (but not with 30S subunits that are part of 70S ribosomes or polysomes). Required for efficient processing of 16S rRNA. May interact with the 5'-terminal helix region of 16S rRNA. This Actinobacillus succinogenes (strain ATCC 55618 / DSM 22257 / CCUG 43843 / 130Z) protein is Ribosome-binding factor A.